We begin with the raw amino-acid sequence, 505 residues long: ATP synthase subunit beta (505 aa).

157-164 (GGAGVGKT) serves as a coordination point for ATP.

This sequence belongs to the ATPase alpha/beta chains family. In terms of assembly, F-type ATPases have 2 components, CF(1) - the catalytic core - and CF(0) - the membrane proton channel. CF(1) has five subunits: alpha(3), beta(3), gamma(1), delta(1), epsilon(1). CF(0) has three main subunits: a(1), b(2) and c(9-12). The alpha and beta chains form an alternating ring which encloses part of the gamma chain. CF(1) is attached to CF(0) by a central stalk formed by the gamma and epsilon chains, while a peripheral stalk is formed by the delta and b chains.

The protein resides in the cell inner membrane. The catalysed reaction is ATP + H2O + 4 H(+)(in) = ADP + phosphate + 5 H(+)(out). In terms of biological role, produces ATP from ADP in the presence of a proton gradient across the membrane. The catalytic sites are hosted primarily by the beta subunits. This is ATP synthase subunit beta from Bacteroides thetaiotaomicron (strain ATCC 29148 / DSM 2079 / JCM 5827 / CCUG 10774 / NCTC 10582 / VPI-5482 / E50).